Here is a 759-residue protein sequence, read N- to C-terminus: Arylphorin subunit A4 (759 aa).

The signal sequence occupies residues 1-16; the sequence is MKIAIVLLAIIALVAA.

Belongs to the hemocyanin family. Heterohexamer. As to expression, fat body.

It is found in the secreted. Its subcellular location is the extracellular space. Functionally, arylphorin is a larval storage protein (LSP) which may serve as a storage protein used primarily as a source of aromatic amino acids for protein synthesis during metamorphosis. It is a constituent of the sclerotizing system of the cuticle, and serves as a carrier for ecdysteroid hormone. The sequence is that of Arylphorin subunit A4 from Calliphora vicina (Blue blowfly).